Consider the following 623-residue polypeptide: Kelch-like protein diablo (623 aa).

The tract at residues 1 to 54 (MGDLPGSGSTAQPRDAAVTGTGGNSTAGGGSSVGSTAVDRPPSPARLSHTSEKH) is disordered. At T19 the chain carries Phosphothreonine. Positions 20–32 (GTGGNSTAGGGSS) are enriched in gly residues. The region spanning 72-139 (CDVVLNVGGR…CYTAHIIVEE (68 aa)) is the BTB domain. One can recognise a BACK domain in the interval 174-276 (CLGIRAFADT…SPKFLVGTVG (103 aa)). Kelch repeat units lie at residues 323 to 369 (VLFA…VLND), 371 to 417 (LYAV…VLDE), 418 to 464 (FLYA…VLGG), 466 to 511 (LYAI…VFNN), 513 to 558 (IYAV…VVNG), and 559 to 605 (QLYA…VMRA).

The protein operates within protein modification; protein ubiquitination. Probable substrate-specific adapter of an E3 ubiquitin-protein ligase complex which mediates the ubiquitination and subsequent proteasomal degradation of target proteins. May have a role in synapse differentiation and growth. The chain is Kelch-like protein diablo from Drosophila simulans (Fruit fly).